The sequence spans 360 residues: S-adenosylmethionine:tRNA ribosyltransferase-isomerase (360 aa).

It belongs to the QueA family. In terms of assembly, monomer.

The protein resides in the cytoplasm. It carries out the reaction 7-aminomethyl-7-carbaguanosine(34) in tRNA + S-adenosyl-L-methionine = epoxyqueuosine(34) in tRNA + adenine + L-methionine + 2 H(+). It functions in the pathway tRNA modification; tRNA-queuosine biosynthesis. Its function is as follows. Transfers and isomerizes the ribose moiety from AdoMet to the 7-aminomethyl group of 7-deazaguanine (preQ1-tRNA) to give epoxyqueuosine (oQ-tRNA). The protein is S-adenosylmethionine:tRNA ribosyltransferase-isomerase of Rhodopseudomonas palustris (strain ATCC BAA-98 / CGA009).